Reading from the N-terminus, the 227-residue chain is Small heat shock protein hspG3 (227 aa).

Residues 31–227 (NKRVDIIPSM…SSNTIKININ (197 aa)) form the sHSP domain. Positions 119–164 (QQQQLENSNKENDEPSIEEFEEDVKSKSELNKTTLNTTENKDEDKT) are disordered.

Belongs to the small heat shock protein (HSP20) family.

This Dictyostelium discoideum (Social amoeba) protein is Small heat shock protein hspG3 (hspG3).